Here is a 599-residue protein sequence, read N- to C-terminus: Group II intron-encoded protein LtrA (599 aa).

In terms of domain architecture, Reverse transcriptase spans 70–361 (IIQSLKDGTY…QPARFLGYDI (292 aa)). Residues 381–549 (NGSVELLIPL…AKCCELCGTS (169 aa)) form an intron maturase type-2 region.

The protein in the N-terminal section; belongs to the bacterial reverse transcriptase family. Homodimer. Mg(2+) serves as cofactor.

The catalysed reaction is DNA(n) + a 2'-deoxyribonucleoside 5'-triphosphate = DNA(n+1) + diphosphate. In terms of biological role, multifunctional protein that promotes group II intron splicing and mobility by acting both on RNA and DNA. It has three activities: reverse transcriptase (RT) for intron duplication, maturase to promote splicing, and DNA endonuclease for site-specific cleavage of recipient alleles. The intron-encoded protein promotes splicing by facilitating the formation of the catalytically active structure of the intron RNA. After splicing, the protein remains bound to the excised intron lariat RNA, forming ribonucleoprotein particles, and cleaving the antisense strand of the recipient DNA in the 3' exon. After DNA cleavage, retrohoming occurs by a target DNA-primed reverse transcription of the intron RNA that had reverse spliced into the sense strand of the recipient DNA. It also contributes to the recognition of the DNA target site and acts as a repressor of its own translation. The chain is Group II intron-encoded protein LtrA (ltrA) from Lactococcus lactis subsp. cremoris (Streptococcus cremoris).